The following is a 377-amino-acid chain: Chaperone protein DnaJ (377 aa).

Residues 5–70 (DYYEILGVER…EKRAAYDQYG (66 aa)) enclose the J domain. The CR-type zinc-finger motif lies at 134–212 (GITKDIQIQT…CHGDGRVHKT (79 aa)). Zn(2+) contacts are provided by Cys147, Cys150, Cys164, Cys167, Cys186, Cys189, Cys200, and Cys203. CXXCXGXG motif repeat units lie at residues 147–154 (CDHCNGSG), 164–171 (CPTCHGHG), 186–193 (CPHCHGTG), and 200–207 (CKKCHGDG).

It belongs to the DnaJ family. Homodimer. Requires Zn(2+) as cofactor.

The protein localises to the cytoplasm. Functionally, participates actively in the response to hyperosmotic and heat shock by preventing the aggregation of stress-denatured proteins and by disaggregating proteins, also in an autonomous, DnaK-independent fashion. Unfolded proteins bind initially to DnaJ; upon interaction with the DnaJ-bound protein, DnaK hydrolyzes its bound ATP, resulting in the formation of a stable complex. GrpE releases ADP from DnaK; ATP binding to DnaK triggers the release of the substrate protein, thus completing the reaction cycle. Several rounds of ATP-dependent interactions between DnaJ, DnaK and GrpE are required for fully efficient folding. Also involved, together with DnaK and GrpE, in the DNA replication of plasmids through activation of initiation proteins. The polypeptide is Chaperone protein DnaJ (Actinobacillus succinogenes (strain ATCC 55618 / DSM 22257 / CCUG 43843 / 130Z)).